Reading from the N-terminus, the 72-residue chain is Translation initiation factor IF-1 (72 aa).

One can recognise an S1-like domain in the interval Met-1–Lys-72.

This sequence belongs to the IF-1 family. As to quaternary structure, component of the 30S ribosomal translation pre-initiation complex which assembles on the 30S ribosome in the order IF-2 and IF-3, IF-1 and N-formylmethionyl-tRNA(fMet); mRNA recruitment can occur at any time during PIC assembly.

The protein localises to the cytoplasm. One of the essential components for the initiation of protein synthesis. Stabilizes the binding of IF-2 and IF-3 on the 30S subunit to which N-formylmethionyl-tRNA(fMet) subsequently binds. Helps modulate mRNA selection, yielding the 30S pre-initiation complex (PIC). Upon addition of the 50S ribosomal subunit IF-1, IF-2 and IF-3 are released leaving the mature 70S translation initiation complex. The polypeptide is Translation initiation factor IF-1 (Desulforamulus reducens (strain ATCC BAA-1160 / DSM 100696 / MI-1) (Desulfotomaculum reducens)).